We begin with the raw amino-acid sequence, 418 residues long: 3-isopropylmalate dehydratase large subunit (418 aa).

Residues cysteine 298, cysteine 358, and cysteine 361 each contribute to the [4Fe-4S] cluster site.

This sequence belongs to the aconitase/IPM isomerase family. LeuC type 2 subfamily. In terms of assembly, heterodimer of LeuC and LeuD. It depends on [4Fe-4S] cluster as a cofactor.

The enzyme catalyses (2R,3S)-3-isopropylmalate = (2S)-2-isopropylmalate. The protein operates within amino-acid biosynthesis; L-leucine biosynthesis; L-leucine from 3-methyl-2-oxobutanoate: step 2/4. Its function is as follows. Catalyzes the isomerization between 2-isopropylmalate and 3-isopropylmalate, via the formation of 2-isopropylmaleate. The chain is 3-isopropylmalate dehydratase large subunit from Caldanaerobacter subterraneus subsp. tengcongensis (strain DSM 15242 / JCM 11007 / NBRC 100824 / MB4) (Thermoanaerobacter tengcongensis).